Consider the following 336-residue polypeptide: Calcium uniporter regulatory subunit MCUb, mitochondrial (336 aa).

The transit peptide at 1 to 35 directs the protein to the mitochondrion; the sequence is MLQRGLWPWRTRLLPTPGTWRPARPWPLPPPPQVL. The stretch at 179–210 forms a coiled coil; it reads ESQKKREHHLLEKIDHLKEQLQPLEQVKAGIE. 2 helical membrane passes run 220 to 240 and 250 to 270; these read LLWA…WLTW and PVTY…FIVT. Residues 297-323 adopt a coiled-coil conformation; that stretch reads FDVQQYNKLKEDLAKAKESLKQARHSL.

This sequence belongs to the MCU (TC 1.A.77) family. As to quaternary structure, homooligomer. Associates with the uniplex complex, composed of MCU, MICU1, MICU2 and EMRE/SMDT1, inhibiting its activity.

Its subcellular location is the mitochondrion inner membrane. In terms of biological role, negative regulator of the mitochondrial calcium uniporter (MCU), a channel that mediates calcium uptake into the mitochondrial matrix. MCUB is required to limit mitochondrial calcium overload during stress. Acts as a dominant-negative regulator that displaces MCU from the functional uniplex complex and thereby decreases the association of calcium sensors MICU1 and MICU2, preventing channel gating. Mitochondrial calcium homeostasis plays key roles in mitochondrial metabolism. Acts as an important regulator of mitochondrial metabolism in response to stress in muscle cells: induced in response to fasting, leading to restrict mitochondrial calcium uptake, resulting in reprogramming of mitochondria toward fatty acid oxidation preference. Acts as a regulator of macrophage polarization during skeletal muscle regeneration: inhibition of mitochondrial calcium uptake drives differentiation of macrophages with anti-inflammatory profile, promoting the differentiation and fusion of satellite cells. The chain is Calcium uniporter regulatory subunit MCUb, mitochondrial from Homo sapiens (Human).